The sequence spans 290 residues: Light-independent protochlorophyllide reductase iron-sulfur ATP-binding protein (290 aa).

ATP is bound by residues 10–15 (GIGKST) and lysine 39. Position 14 (serine 14) interacts with Mg(2+). [4Fe-4S] cluster-binding residues include cysteine 95 and cysteine 129. 180 to 181 (NR) is a binding site for ATP.

The protein belongs to the NifH/BchL/ChlL family. Homodimer. Protochlorophyllide reductase is composed of three subunits; ChlL, ChlN and ChlB. It depends on [4Fe-4S] cluster as a cofactor.

The protein resides in the plastid. Its subcellular location is the chloroplast. It carries out the reaction chlorophyllide a + oxidized 2[4Fe-4S]-[ferredoxin] + 2 ADP + 2 phosphate = protochlorophyllide a + reduced 2[4Fe-4S]-[ferredoxin] + 2 ATP + 2 H2O. The protein operates within porphyrin-containing compound metabolism; chlorophyll biosynthesis (light-independent). Component of the dark-operative protochlorophyllide reductase (DPOR) that uses Mg-ATP and reduced ferredoxin to reduce ring D of protochlorophyllide (Pchlide) to form chlorophyllide a (Chlide). This reaction is light-independent. The L component serves as a unique electron donor to the NB-component of the complex, and binds Mg-ATP. The protein is Light-independent protochlorophyllide reductase iron-sulfur ATP-binding protein of Porphyra purpurea (Red seaweed).